The sequence spans 373 residues: Flagellar P-ring protein (373 aa).

An N-terminal signal peptide occupies residues 1–30 (MTNRWSFDVKKNLVTLILTWLCLSISTAQA).

This sequence belongs to the FlgI family. The basal body constitutes a major portion of the flagellar organelle and consists of four rings (L,P,S, and M) mounted on a central rod.

Its subcellular location is the periplasm. The protein resides in the bacterial flagellum basal body. Its function is as follows. Assembles around the rod to form the L-ring and probably protects the motor/basal body from shearing forces during rotation. This chain is Flagellar P-ring protein, found in Aliivibrio salmonicida (strain LFI1238) (Vibrio salmonicida (strain LFI1238)).